The sequence spans 149 residues: Large ribosomal subunit protein bL17 (149 aa).

The protein belongs to the bacterial ribosomal protein bL17 family. Part of the 50S ribosomal subunit. Contacts protein L32.

The chain is Large ribosomal subunit protein bL17 from Kosmotoga olearia (strain ATCC BAA-1733 / DSM 21960 / TBF 19.5.1).